The following is a 271-amino-acid chain: Peroxisomal biogenesis factor 2 (271 aa).

The Peroxisomal matrix segment spans residues 1–2; it reads MS. Residues 3-29 traverse the membrane as a helical segment; the sequence is RVAQLDSIALDKELYGQFWSEFNAAFN. The Cytoplasmic portion of the chain corresponds to 30-33; the sequence is TSEH. The helical transmembrane segment at 34-60 threads the bilayer; it reads KEEWELALNTVVFMCATRFLPHYGSSC. The Peroxisomal matrix segment spans residues 61–77; the sequence is TYGSALSGVVFQCRKRT. Residues 78 to 97 traverse the membrane as a helical segment; the sequence is LYVVTVLAGYVWKKITHIIF. At 98–101 the chain is on the cytoplasmic side; the sequence is NGPH. Residues 102–133 traverse the membrane as a helical segment; that stretch reads CGNQMMWLKLYKWVNLLYHGCDVTNFLRFLAA. The Peroxisomal matrix segment spans residues 134–175; that stretch reads EGPNARAFLSPLYRAFNVHSTRLIRDGSAIASEFYSNSVFAG. A helical transmembrane segment spans residues 176–197; that stretch reads LEYQNRQLLWNALLELFSNTLL. Topologically, residues 198–271 are cytoplasmic; that stretch reads TKRGLLTFVK…SGRLTASPVY (74 aa). Residues C222, C225, C237, C238, C243, C246, C256, and C259 each coordinate Zn(2+). Residues 222–259 form an RING-type zinc finger; that stretch reads CPRCGGFPTNPYQIACCRANYCYVCVVKALEWSMCDAC.

The protein belongs to the pex2/pex10/pex12 family. Component of the PEX2-PEX10-PEX12 retrotranslocation channel, composed of PEX2, PEX10 and PEX12.

The protein localises to the peroxisome membrane. The catalysed reaction is [E2 ubiquitin-conjugating enzyme]-S-ubiquitinyl-L-cysteine + [acceptor protein]-L-cysteine = [E2 ubiquitin-conjugating enzyme]-L-cysteine + [acceptor protein]-S-ubiquitinyl-L-cysteine.. Its pathway is protein modification; protein ubiquitination. Functionally, E3 ubiquitin-protein ligase component of a retrotranslocation channel required for peroxisome organization by mediating export of the PEX5 receptor from peroxisomes to the cytosol, thereby promoting PEX5 recycling. The retrotranslocation channel is composed of PEX2, PEX10 and PEX12; each subunit contributing transmembrane segments that coassemble into an open channel that specifically allows the passage of PEX5 through the peroxisomal membrane. PEX2 also regulates peroxisome organization by acting as a E3 ubiquitin-protein ligase. PEX2 ubiquitinates PEX5 during its passage through the retrotranslocation channel: catalyzes monoubiquitination of PEX5 at 'Cys-6', a modification that acts as a signal for PEX5 extraction into the cytosol. The protein is Peroxisomal biogenesis factor 2 of Saccharomyces cerevisiae (strain ATCC 204508 / S288c) (Baker's yeast).